The chain runs to 483 residues: CdaA regulatory protein CdaR (483 aa).

A helical transmembrane segment spans residues 9-26 (WAVKIIALLFALLLYVAV). YbbR-like domains lie at 55–135 (IPVK…TVTI), 143–228 (FPVE…KITV), 237–316 (VPFK…TLHI), and 329–394 (VPIK…VNGP). The disordered stretch occupies residues 410–483 (LTSKKSNTST…STANSQSSSE (74 aa)). Residues 413 to 430 (KKSNTSTNDNSSNTSGNQ) show a composition bias toward low complexity. Basic and acidic residues predominate over residues 431-454 (DTDKQTNDQKNNQQEDTKNTDKNN).

Interacts with CdaA.

Its subcellular location is the cell membrane. Functionally, upon coexpression in E.coli stimulates the diadenylate cyclase activity of CdaA about 20-fold. In B.subtilis c-di-AMP is a second messenger that mediates growth, DNA repair and cell wall homeostasis; it is toxic when present in excess. The polypeptide is CdaA regulatory protein CdaR (Bacillus subtilis (strain 168)).